The following is an 817-amino-acid chain: Phospholipase D alpha 2 (817 aa).

The region spanning 1 to 130 (MAHLLLHGTL…LSGEAIERRL (130 aa)) is the C2 domain. Residue D192 coordinates Ca(2+). Residues 333–372 (YMITHHQKTVIVDHDMPVPRGGGSRRIVSFVGGLDLCDGR) enclose the PLD phosphodiesterase 1 domain. Catalysis depends on residues H338, K340, and D345. H338 lines the a 1,2-diacyl-sn-glycero-3-phosphate pocket. The Ca(2+) site is built by H378 and H412. Positions 529 and 668 each coordinate a 1,2-diacyl-sn-glycero-3-phosphate. Residues 663 to 690 (FMIYVHSKMMIVDDEYIIVGSANINQRS) form the PLD phosphodiesterase 2 domain. Active-site residues include H668, K670, and D675. Ca(2+) is bound at residue E730.

This sequence belongs to the phospholipase D family. C2-PLD subfamily. Requires Ca(2+) as cofactor.

It carries out the reaction a 1,2-diacyl-sn-glycero-3-phosphocholine + H2O = a 1,2-diacyl-sn-glycero-3-phosphate + choline + H(+). Its function is as follows. Hydrolyzes glycerol-phospholipids at the terminal phosphodiesteric bond. Plays an important role in various cellular processes. This Oryza sativa subsp. japonica (Rice) protein is Phospholipase D alpha 2 (PLD2).